The following is a 340-amino-acid chain: MISELVKSFQPYRVVEGNYRIRLDKNENPYDLPGEVKEEIFEELREVSFNRYPHITSMPAREAIADFYGVSPDNVAVGNGSDELLSYLVRLFEGNHIVITPPTFGMYSFYAKLNGVPVVEVPLREDFTLDGEAVAEKAKNARVVFIASPNNPTGNLQPEEEIIRVLETRRPVVLDEAYAEFVGKSLWRLIEEYPNLVVLRTFSKAFGMAGIRAGYMLAGEEIVDALYRIKSPFSVGIMTMTAIRVALRHADLMEKTVRKIVEERERMRRKLGELAYPSDANFLLVRLNAYEELLKRGIVVRKLSGRLEGHIRVTVGRRWENDAFLEAVEEIAGGESVGGL.

Position 204 is an N6-(pyridoxal phosphate)lysine (Lys-204).

This sequence belongs to the class-II pyridoxal-phosphate-dependent aminotransferase family. Histidinol-phosphate aminotransferase subfamily. Requires pyridoxal 5'-phosphate as cofactor.

The catalysed reaction is L-histidinol phosphate + 2-oxoglutarate = 3-(imidazol-4-yl)-2-oxopropyl phosphate + L-glutamate. The protein operates within amino-acid biosynthesis; L-histidine biosynthesis; L-histidine from 5-phospho-alpha-D-ribose 1-diphosphate: step 7/9. The protein is Histidinol-phosphate aminotransferase of Thermococcus gammatolerans (strain DSM 15229 / JCM 11827 / EJ3).